The chain runs to 382 residues: G2/mitotic-specific cyclin-B2 (382 aa).

The span at 1–12 shows a compositional bias: polar residues; sequence MSSVEAVTQQQL. Positions 1 to 78 are disordered; sequence MSSVEAVTQQ…HTSAGDPAPI (78 aa). Residues 38–47 show a composition bias toward low complexity; it reads NRNAAAAANR.

The protein belongs to the cyclin family. Cyclin AB subfamily. In terms of assembly, interacts with the CDK1 protein kinase to form a serine/threonine kinase holoenzyme complex also known as maturation promoting factor (MPF). The cyclin subunit imparts substrate specificity to the complex.

Its function is as follows. Essential for the control of the cell cycle at the G2/M (mitosis) transition. In Oryzias javanicus (Javanese ricefish), this protein is G2/mitotic-specific cyclin-B2 (ccnb2).